Consider the following 275-residue polypeptide: Dihydroxyacetone phosphatase (275 aa).

The Nucleophile role is filled by D10. Mg(2+) contacts are provided by D10, D12, and D206. D12 acts as the Proton donor/acceptor in catalysis.

It belongs to the HAD-like hydrolase superfamily. In terms of assembly, homohexamer. Requires Mg(2+) as cofactor.

It catalyses the reaction dihydroxyacetone phosphate + H2O = dihydroxyacetone + phosphate. Catalyzes dephosphorylation of dihydroxyacetone phosphate (DHAP) to produce 1,3-dihydroxyacetone (DHA). Is the main enzyme responsible for DHA production from catabolism of sugars (glucose, fructose, and sucrose) in C.glutamicum. Displays no activity toward nucleoside monophosphates (AMP, CMP, GMP, or UMP). This is Dihydroxyacetone phosphatase from Corynebacterium glutamicum (strain R).